A 623-amino-acid chain; its full sequence is Low affinity potassium transport system protein Kup (623 aa).

A run of 12 helical transmembrane segments spans residues 9–29, 49–69, 101–121, 137–157, 163–183, 212–232, 247–267, 276–296, 337–357, 363–383, 395–415, and 419–439; these read LPAITLAAIGVVYGDIGTSPL, VFGFLSLIFWLLVFVVSFKYL, VLVILGLIGGSFFYGEVVITP, PSLDPYIVPLSIVVLTLLFMI, GMVGKLFAPIMLAWFLVLAVL, AVSFAALGAVVLSITGVEALY, WFSVVLPSLVLNYFGQGALLL, PFFLLAPDWALIPMLILATLA, IYIPVVNWLLYFAVVIVIVSF, LAAAYGIAVTGTMVLTSILFA, ILVGLMVVAFLCVDVPLFSAN, and LFSGGWLPLSLGLVMFIIMTT.

This sequence belongs to the HAK/KUP transporter (TC 2.A.72) family.

It is found in the cell inner membrane. The catalysed reaction is K(+)(in) + H(+)(in) = K(+)(out) + H(+)(out). In terms of biological role, responsible for the low-affinity transport of potassium into the cell. Likely operates as a K(+):H(+) symporter. The chain is Low affinity potassium transport system protein Kup from Cronobacter sakazakii (strain ATCC BAA-894) (Enterobacter sakazakii).